The chain runs to 62 residues: Large ribosomal subunit protein uL30 (62 aa).

The protein belongs to the universal ribosomal protein uL30 family. Part of the 50S ribosomal subunit.

The chain is Large ribosomal subunit protein uL30 from Polynucleobacter asymbioticus (strain DSM 18221 / CIP 109841 / QLW-P1DMWA-1) (Polynucleobacter necessarius subsp. asymbioticus).